Here is a 151-residue protein sequence, read N- to C-terminus: Deoxyuridine 5'-triphosphate nucleotidohydrolase (151 aa).

Substrate contacts are provided by residues 70–72, Asn-83, 87–89, and Met-97; these read RSG and LID.

Belongs to the dUTPase family. Requires Mg(2+) as cofactor.

The catalysed reaction is dUTP + H2O = dUMP + diphosphate + H(+). It participates in pyrimidine metabolism; dUMP biosynthesis; dUMP from dCTP (dUTP route): step 2/2. Its function is as follows. This enzyme is involved in nucleotide metabolism: it produces dUMP, the immediate precursor of thymidine nucleotides and it decreases the intracellular concentration of dUTP so that uracil cannot be incorporated into DNA. The polypeptide is Deoxyuridine 5'-triphosphate nucleotidohydrolase (Pseudomonas fluorescens (strain ATCC BAA-477 / NRRL B-23932 / Pf-5)).